A 350-amino-acid polypeptide reads, in one-letter code: MLEQLQTLKSEAETQIKEASDLKTLNDLRVKYLGKKGPMTEIMKQMGKLSAEEKPKMGSLANEVRTALTKAITGKQQILETEAINEKLKAETIDITLPGTAPSIGTKHLLTQVIEEMEDMFIGMGYEIAEGPEVELDYYNFEALNLPKDHPARDMQDSFYITENTLLRTQTSPVQARTMEKHDFSKGPIKVICPGKVYRRDNDDATHSHQFTQIEGLVVGENITFADLKGTLTVLAKTMFGEEREIRLRPSFFPFTEPSVEMDISCFKCGGKGCRVCKGTGWIEILGSGMVHPNVLEMSGIDSTRYSGFAFGLGPERVAMLKYAVDDIRHLYTNDLRFTKQFQSTETGEI.

Glu-257 is a binding site for Mg(2+).

This sequence belongs to the class-II aminoacyl-tRNA synthetase family. Phe-tRNA synthetase alpha subunit type 1 subfamily. In terms of assembly, tetramer of two alpha and two beta subunits. The cofactor is Mg(2+).

The protein resides in the cytoplasm. The enzyme catalyses tRNA(Phe) + L-phenylalanine + ATP = L-phenylalanyl-tRNA(Phe) + AMP + diphosphate + H(+). In Listeria welshimeri serovar 6b (strain ATCC 35897 / DSM 20650 / CCUG 15529 / CIP 8149 / NCTC 11857 / SLCC 5334 / V8), this protein is Phenylalanine--tRNA ligase alpha subunit.